The primary structure comprises 475 residues: 23S rRNA (uracil(1939)-C(5))-methyltransferase RlmD (475 aa).

A compositionally biased stretch (basic residues) spans 1–10 (MAMLGKRRPP). A disordered region spans residues 1–33 (MAMLGKRRPPRTANERVRRERGSATRRDDATAD). A compositionally biased stretch (basic and acidic residues) spans 13–30 (ANERVRRERGSATRRDDA). In terms of domain architecture, TRAM spans 26–85 (RRDDATADGLSIERLAHDGRGVARDPHGKTVFVDQALPGERVRVAVHRQRKRFDEAHVVE). C98, C104, C107, and C183 together coordinate [4Fe-4S] cluster. S-adenosyl-L-methionine is bound by residues Q294, F323, N328, E344, D371, and D388. C414 (nucleophile) is an active-site residue. A disordered region spans residues 455–475 (TRDTPRGRSTSVEREDHGQGP). Over residues 457-475 (DTPRGRSTSVEREDHGQGP) the composition is skewed to basic and acidic residues.

The protein belongs to the class I-like SAM-binding methyltransferase superfamily. RNA M5U methyltransferase family. RlmD subfamily.

It carries out the reaction uridine(1939) in 23S rRNA + S-adenosyl-L-methionine = 5-methyluridine(1939) in 23S rRNA + S-adenosyl-L-homocysteine + H(+). In terms of biological role, catalyzes the formation of 5-methyl-uridine at position 1939 (m5U1939) in 23S rRNA. This is 23S rRNA (uracil(1939)-C(5))-methyltransferase RlmD from Chromohalobacter salexigens (strain ATCC BAA-138 / DSM 3043 / CIP 106854 / NCIMB 13768 / 1H11).